The primary structure comprises 133 residues: MNRRVARLRAVQTLYQLTLIDINVDKAIENTLNDEEEPSEFYNTLVHGTLEHQDEIDGYLSENLKGYTLDRLGHVDRAIARMGLFEMLYLDDIPVNVTLNEAIELAKAFGGTDAGRFINGVLSNSYDMAMKNK.

The protein belongs to the NusB family.

Its function is as follows. Involved in transcription antitermination. Required for transcription of ribosomal RNA (rRNA) genes. Binds specifically to the boxA antiterminator sequence of the ribosomal RNA (rrn) operons. The polypeptide is Transcription antitermination protein NusB (Shouchella clausii (strain KSM-K16) (Alkalihalobacillus clausii)).